The following is a 397-amino-acid chain: UPF0261 protein mlr3387 (397 aa).

Belongs to the UPF0261 family.

The sequence is that of UPF0261 protein mlr3387 from Mesorhizobium japonicum (strain LMG 29417 / CECT 9101 / MAFF 303099) (Mesorhizobium loti (strain MAFF 303099)).